Here is a 100-residue protein sequence, read N- to C-terminus: NADH-quinone oxidoreductase subunit K (100 aa).

The next 3 membrane-spanning stretches (helical) occupy residues 4–24 (TSYY…GVLL), 29–49 (IVIF…LVAF), and 61–81 (IVFF…ALLV).

This sequence belongs to the complex I subunit 4L family. As to quaternary structure, NDH-1 is composed of 14 different subunits. Subunits NuoA, H, J, K, L, M, N constitute the membrane sector of the complex.

The protein localises to the cell membrane. The catalysed reaction is a quinone + NADH + 5 H(+)(in) = a quinol + NAD(+) + 4 H(+)(out). Its function is as follows. NDH-1 shuttles electrons from NADH, via FMN and iron-sulfur (Fe-S) centers, to quinones in the respiratory chain. The immediate electron acceptor for the enzyme in this species is believed to be ubiquinone. Couples the redox reaction to proton translocation (for every two electrons transferred, four hydrogen ions are translocated across the cytoplasmic membrane), and thus conserves the redox energy in a proton gradient. This Chloroflexus aggregans (strain MD-66 / DSM 9485) protein is NADH-quinone oxidoreductase subunit K.